We begin with the raw amino-acid sequence, 149 residues long: MKTIDVKILDPRMQEQMPAYATSGSAGLDLRACIEAPITIKPGETHLIPTGLAIHIGNPAYAAVILPRSGMGHKHGIVLGNLVGLIDSDYQGQLMVSTWNRGQAEFVLNPMERLAQLVIVPVLQVGFNIVDDFDSSERGAGGFGSTGKH.

Residues 68 to 70 (RSG), Asn-81, 85 to 87 (LID), and Met-95 contribute to the substrate site.

It belongs to the dUTPase family. Mg(2+) is required as a cofactor.

The catalysed reaction is dUTP + H2O = dUMP + diphosphate + H(+). Its pathway is pyrimidine metabolism; dUMP biosynthesis; dUMP from dCTP (dUTP route): step 2/2. This enzyme is involved in nucleotide metabolism: it produces dUMP, the immediate precursor of thymidine nucleotides and it decreases the intracellular concentration of dUTP so that uracil cannot be incorporated into DNA. In Herminiimonas arsenicoxydans, this protein is Deoxyuridine 5'-triphosphate nucleotidohydrolase.